Here is an 875-residue protein sequence, read N- to C-terminus: Leucine--tRNA ligase (875 aa).

Positions Pro57–His67 match the 'HIGH' region motif. The 'KMSKS' region motif lies at Lys631–Ser635. An ATP-binding site is contributed by Lys634.

It belongs to the class-I aminoacyl-tRNA synthetase family.

It localises to the cytoplasm. The enzyme catalyses tRNA(Leu) + L-leucine + ATP = L-leucyl-tRNA(Leu) + AMP + diphosphate. This Granulibacter bethesdensis (strain ATCC BAA-1260 / CGDNIH1) protein is Leucine--tRNA ligase.